Here is a 1687-residue protein sequence, read N- to C-terminus: Genome polyprotein (1687 aa).

A compositionally biased stretch (polar residues) spans 1-13; the sequence is MRMATPSSAPSVR. Residues 1 to 56 are disordered; sequence MRMATPSSAPSVRNTEKRKNKKASSKASVSFGAPSPLSSESEDEINYMTPPEQEAQ. The interaction with host MAP1LC3A/LC3 stretch occupies residues 1-116; it reads MRMATPSSAP…FRRYPHLRPK (116 aa). Positions 117-341 are interaction with NTPase; sequence EDRPDAPSHA…ISIFGEWQAE (225 aa). An interaction with NS4 region spans residues 244–341; it reads SPVQDWNVDP…ISIFGEWQAE (98 aa). Host ER membrane association regions lie at residues 261–292 and 302–341; these read KLRMVSDGILVALSAVIGRPIKNLLASVKPLN and WTFSGIVNALILLAELFDIFWTPPDVTNWMISIFGEWQAE. The interaction with NS1-2, NS4 and homooligomerization stretch occupies residues 342-518; the sequence is GPFDLALDVV…GKTCFCQNLA (177 aa). In terms of domain architecture, SF3 helicase spans 476–641; it reads RISMARAAFE…DDARARAPGD (166 aa). An ATP-binding site is contributed by 504–511; that stretch reads GRPGIGKT. Positions 595–700 are important for mitochondrion targeting; it reads VIIITTNQQT…AVALVHERHD (106 aa). The segment at 893–898 is acidic; the sequence is DEEYDE. An O-(5'-phospho-RNA)-tyrosine modification is found at Tyr-896. The interval 978 to 994 is interaction with host EIF4G; it reads WADDDRQVDYGEKINFE. A Peptidase C37 domain is found at 995–1172; that stretch reads APVSIWSRVV…AATHGEPTLE (178 aa). Residues His-1024, Asp-1048, and Cys-1133 each act as for 3CLpro activity in the active site. A RdRp catalytic domain is found at 1416–1537; sequence RYHMDADYTR…STNLELDMVK (122 aa). Residues Asp-1420 and Asp-1422 each contribute to the Mg(2+) site. The cysteines at positions 1482 and 1484 are disulfide-linked. Positions 1524, 1525, and 1569 each coordinate Mg(2+).

In terms of assembly, homodimer. Interacts with NTPase; this interaction increases the proapoptotic activity of the NTPase and is crucial for the formation of the viral replication complex. Interacts with NS4; this interaction is crucial for the formation of the viral replication complex. Interacts (via N-terminus) with host VAPA. Interacts with host VAPB. Monomer. As to quaternary structure, homooligomer. Interacts with NS1-2; this interaction increases the proapoptotic activity of the NTPase and is crucial for the formation of the viral replication complex. Interacts with NS4; this interaction increases the proapoptotic activity of the NTPase. Interacts with host G3BP1; this interaction leads to the redistribution of G3BP1 and its cellular partners to the viral replication complexes, thereby preventing the assembly of stress granules. In terms of assembly, homodimer. Monomer; in solution. Interacts with NTPase; this interaction increases the proapoptotic activity of the NTPase. Interacts with NS1-2; this interaction is crucial for the formation of the viral replication complex. As to quaternary structure, monomer. Interacts with the RNA-directed RNA polymerase; this interaction induces the multimerization of the RdRp and enhances its activity. Interacts with host IEF4E; this interaction plays a role in translation of viral proteins. Interacts (via C-terminus) with host IEF4G1 (via central domain); this interaction plays a role in translation of viral proteins. In terms of assembly, homohexamer; also forms fibrous hexameric oligomer. Interacts with the viral genome-linked protein; this interaction induces the multimerization of the RdRp and enhances its activity. It depends on Mg(2+) as a cofactor. Mn(2+) serves as cofactor. In terms of processing, specific enzymatic cleavages in vivo yield mature proteins. 3CLpro is first autocatalytically cleaved, then processes the whole polyprotein. Cleaved by host CASP3/caspase 3 at 18-22 h.p.i. The cleavage allows NS1 secretion, which is essential for intestinal infection and resistance to IFN-lambda. Post-translationally, VPg is uridylylated by the polymerase and is covalently attached to the 5'-end of the polyadenylated genomic and subgenomic RNAs. This uridylylated form acts as a nucleotide-peptide primer for the polymerase.

Its subcellular location is the host endoplasmic reticulum membrane. The protein resides in the secreted. It is found in the host endosome membrane. The protein localises to the host mitochondrion. It localises to the host cytoplasm. Its subcellular location is the host perinuclear region. It catalyses the reaction a ribonucleoside 5'-triphosphate + H2O = a ribonucleoside 5'-diphosphate + phosphate + H(+). The enzyme catalyses Endopeptidase with a preference for cleavage when the P1 position is occupied by Glu-|-Xaa and the P1' position is occupied by Gly-|-Yaa.. The catalysed reaction is RNA(n) + a ribonucleoside 5'-triphosphate = RNA(n+1) + diphosphate. Inhibited by Suramin, Suramin-related compounds and NF023. Inhibited by PPNDS. Functionally, induces the proliferation of the host smooth ER membranes forming long tubular structures. These remodeled membranes probably form the viral factories that contain the replication complex. May play a role in viral replication by interacting with host VAPA, a vesicle-associated membrane protein that plays a role in SNARE-mediated vesicle fusion. This interaction may target replication complex to intracellular membranes. Promotes intestinal tropism and persistent fecal shedding in strain CR6. This function requires Glu-94 and is present in persistant strains. Its function is as follows. Displays NTPase activity, but probably no helicase activity. Displays RNA chaperone-like activity and destabilizes dsRNA. Induces the formation of convoluted membranes derived from the host ER. These remodeled membranes probably form the viral factories that contain the replication complex. Initiates host cell death by targeting the mitochondrial outer membrane, leading to the permeabilization of mitochondria, programmed host cell death and viral egress. Externalization of host cardiolipin seems to be involved in the process. Probably plays a role in preventing the assembly of host stress granules. In terms of biological role, probable key protein responsible for the formation of membrane alterations by the virus. Induces the formation of convoluted membranes derived from the host ER. These remodeled membranes probably form the viral factories that contain the replication complex. May play a role in targeting replication complex to intracellular membranes. Functionally, viral genome-linked protein is covalently linked to the 5'-end of the positive-strand, negative-strand genomic RNAs and subgenomic RNA. Acts as a genome-linked replication primer. May recruit ribosome to viral RNA thereby promoting viral proteins translation. Interacts with host translation initiation complex to allow the translation of viral proteins. Induces the formation of aggregates of RNA-directed RNA polymerase in the presence of RNA. Through its interaction with the viral RNA-directed RNA polymerase, plays a crucial role in enhancing the polymerase activity. Processes the polyprotein. 3CLpro-RdRp is first released by autocleavage, then all other proteins are cleaved. May cleave host polyadenylate-binding protein thereby inhibiting cellular translation. Does not cleave host G3BP1. Its function is as follows. Replicates genomic and antigenomic RNA by recognizing replications specific signals. Also transcribes a subgenomic mRNA by initiating RNA synthesis internally on antigenomic RNA. This sgRNA codes for structural proteins. Catalyzes the covalent attachment VPg with viral RNAs. This Norovirus (isolate Mouse/NoV/United States/MNV1/2002/GV) (MNV-1) protein is Genome polyprotein.